The following is a 99-amino-acid chain: MSSQEKLLKTVIRPHVSDKTYGLSDANSTIVFEVARFANKQDVKNAVEKLFEVKVESVNILNVKGKARRFGRVEGRTKAWKKAYVKLAEGHDINFVGAE.

This sequence belongs to the universal ribosomal protein uL23 family. In terms of assembly, part of the 50S ribosomal subunit. Contacts protein L29, and trigger factor when it is bound to the ribosome.

One of the early assembly proteins it binds 23S rRNA. One of the proteins that surrounds the polypeptide exit tunnel on the outside of the ribosome. Forms the main docking site for trigger factor binding to the ribosome. The polypeptide is Large ribosomal subunit protein uL23 (Francisella tularensis subsp. holarctica (strain OSU18)).